The primary structure comprises 154 residues: 6,7-dimethyl-8-ribityllumazine synthase (154 aa).

5-amino-6-(D-ribitylamino)uracil contacts are provided by residues Phe-22, 56–58 (AFE), and 80–82 (AVI). (2S)-2-hydroxy-3-oxobutyl phosphate is bound at residue 85–86 (ET). The Proton donor role is filled by His-88. Position 113 (Phe-113) interacts with 5-amino-6-(D-ribitylamino)uracil. Residue Arg-127 coordinates (2S)-2-hydroxy-3-oxobutyl phosphate.

Belongs to the DMRL synthase family.

It catalyses the reaction (2S)-2-hydroxy-3-oxobutyl phosphate + 5-amino-6-(D-ribitylamino)uracil = 6,7-dimethyl-8-(1-D-ribityl)lumazine + phosphate + 2 H2O + H(+). Its pathway is cofactor biosynthesis; riboflavin biosynthesis; riboflavin from 2-hydroxy-3-oxobutyl phosphate and 5-amino-6-(D-ribitylamino)uracil: step 1/2. In terms of biological role, catalyzes the formation of 6,7-dimethyl-8-ribityllumazine by condensation of 5-amino-6-(D-ribitylamino)uracil with 3,4-dihydroxy-2-butanone 4-phosphate. This is the penultimate step in the biosynthesis of riboflavin. The polypeptide is 6,7-dimethyl-8-ribityllumazine synthase (Thermoanaerobacter sp. (strain X514)).